We begin with the raw amino-acid sequence, 323 residues long: Acetyl-coenzyme A carboxylase carboxyl transferase subunit alpha (323 aa).

The CoA carboxyltransferase C-terminal domain maps to Arg-39 to Gln-293.

It belongs to the AccA family. In terms of assembly, acetyl-CoA carboxylase is a heterohexamer composed of biotin carboxyl carrier protein (AccB), biotin carboxylase (AccC) and two subunits each of ACCase subunit alpha (AccA) and ACCase subunit beta (AccD).

Its subcellular location is the cytoplasm. It catalyses the reaction N(6)-carboxybiotinyl-L-lysyl-[protein] + acetyl-CoA = N(6)-biotinyl-L-lysyl-[protein] + malonyl-CoA. It functions in the pathway lipid metabolism; malonyl-CoA biosynthesis; malonyl-CoA from acetyl-CoA: step 1/1. In terms of biological role, component of the acetyl coenzyme A carboxylase (ACC) complex. First, biotin carboxylase catalyzes the carboxylation of biotin on its carrier protein (BCCP) and then the CO(2) group is transferred by the carboxyltransferase to acetyl-CoA to form malonyl-CoA. In Burkholderia multivorans (strain ATCC 17616 / 249), this protein is Acetyl-coenzyme A carboxylase carboxyl transferase subunit alpha.